Here is a 118-residue protein sequence, read N- to C-terminus: Holo-[acyl-carrier-protein] synthase (118 aa).

Mg(2+) contacts are provided by aspartate 8 and glutamate 58.

This sequence belongs to the P-Pant transferase superfamily. AcpS family. It depends on Mg(2+) as a cofactor.

It localises to the cytoplasm. The catalysed reaction is apo-[ACP] + CoA = holo-[ACP] + adenosine 3',5'-bisphosphate + H(+). Its function is as follows. Transfers the 4'-phosphopantetheine moiety from coenzyme A to a Ser of acyl-carrier-protein. The polypeptide is Holo-[acyl-carrier-protein] synthase (Streptococcus pyogenes serotype M1).